Here is a 488-residue protein sequence, read N- to C-terminus: Ribulose bisphosphate carboxylase large chain (488 aa).

The substrate site is built by Asn128 and Thr178. The active-site Proton acceptor is the Lys180. Position 182 (Lys182) interacts with substrate. Residues Lys206, Asp208, and Glu209 each coordinate Mg(2+). Lys206 is subject to N6-carboxylysine. His298 functions as the Proton acceptor in the catalytic mechanism. The substrate site is built by Arg299, His331, and Ser383.

It belongs to the RuBisCO large chain family. Type I subfamily. Heterohexadecamer of 8 large chains and 8 small chains. Mg(2+) serves as cofactor.

The catalysed reaction is 2 (2R)-3-phosphoglycerate + 2 H(+) = D-ribulose 1,5-bisphosphate + CO2 + H2O. The enzyme catalyses D-ribulose 1,5-bisphosphate + O2 = 2-phosphoglycolate + (2R)-3-phosphoglycerate + 2 H(+). RuBisCO catalyzes two reactions: the carboxylation of D-ribulose 1,5-bisphosphate, the primary event in carbon dioxide fixation, as well as the oxidative fragmentation of the pentose substrate. Both reactions occur simultaneously and in competition at the same active site. This chain is Ribulose bisphosphate carboxylase large chain, found in Xanthobacter autotrophicus (strain ATCC BAA-1158 / Py2).